Consider the following 101-residue polypeptide: Putative pterin-4-alpha-carbinolamine dehydratase (101 aa).

It belongs to the pterin-4-alpha-carbinolamine dehydratase family.

The enzyme catalyses (4aS,6R)-4a-hydroxy-L-erythro-5,6,7,8-tetrahydrobiopterin = (6R)-L-erythro-6,7-dihydrobiopterin + H2O. The polypeptide is Putative pterin-4-alpha-carbinolamine dehydratase (Rhizobium leguminosarum bv. trifolii (strain WSM2304)).